The sequence spans 107 residues: MDSLASGRWRRRRTEELPAAGDAKRACRRSEPGGYECSGHMLTTCALLSWSTEDQEPRPRGLPASQPDCSQERLSSMVLQNGGRSSAQPCLRCISGESGHFNHTDNH.

Residues 1-32 (MDSLASGRWRRRRTEELPAAGDAKRACRRSEP) form a disordered region. Residues 22–31 (DAKRACRRSE) are compositionally biased toward basic and acidic residues.

This is an uncharacterized protein from Mus musculus (Mouse).